Reading from the N-terminus, the 438-residue chain is Trigger factor (438 aa).

The region spanning 163 to 249 (EDFVLIDYEG…LKEIRKQILP (87 aa)) is the PPIase FKBP-type domain.

The protein belongs to the FKBP-type PPIase family. Tig subfamily.

The protein localises to the cytoplasm. The catalysed reaction is [protein]-peptidylproline (omega=180) = [protein]-peptidylproline (omega=0). Its function is as follows. Involved in protein export. Acts as a chaperone by maintaining the newly synthesized protein in an open conformation. Functions as a peptidyl-prolyl cis-trans isomerase. The chain is Trigger factor from Desulfatibacillum aliphaticivorans.